The chain runs to 160 residues: Bacterial microcompartment shell protein PduK (160 aa).

Positions 11 to 96 (SLGLLEVCGL…PGEGILLAET (86 aa)) constitute a BMC domain.

This sequence belongs to the bacterial microcompartments protein family. As to quaternary structure, interacts with shell proteins PduA and PduP and assembly protein PduM. The cofactor is Fe cation.

The protein localises to the bacterial microcompartment. It participates in polyol metabolism; 1,2-propanediol degradation. Functionally, a minor shell protein of the bacterial microcompartment (BMC) dedicated to 1,2-propanediol (1,2-PD) degradation. The isolated BMC shell component protein ratio for J:A:B':B:K:T:U is approximately 15:10:7:6:1:1:2. Not required for structural integrity of BMCs nor to mitigate propionaldehyde toxicity, it might be involved in spatial organization of BMCs. In terms of biological role, the 1,2-PD-specific bacterial microcompartment (BMC) concentrates low levels of 1,2-PD catabolic enzymes, concentrates volatile reaction intermediates thus enhancing pathway flux and keeps the level of toxic, mutagenic propionaldehyde low. In Salmonella typhimurium (strain LT2 / SGSC1412 / ATCC 700720), this protein is Bacterial microcompartment shell protein PduK.